Consider the following 481-residue polypeptide: Argininosuccinate synthase (481 aa).

ATP is bound by residues 17 to 25 and alanine 43; that span reads AFSGGLDTS. An L-citrulline-binding site is contributed by tyrosine 99. The ATP site is built by glycine 129 and threonine 131. L-aspartate is bound by residues threonine 131, asparagine 135, and aspartate 136. Asparagine 135 contacts L-citrulline. An ATP-binding site is contributed by aspartate 136. L-citrulline-binding residues include arginine 139 and serine 192. Position 194 (aspartate 194) interacts with ATP. Threonine 201, glutamate 203, and glutamate 280 together coordinate L-citrulline.

Belongs to the argininosuccinate synthase family. Type 2 subfamily. As to quaternary structure, homotetramer.

It localises to the cytoplasm. It carries out the reaction L-citrulline + L-aspartate + ATP = 2-(N(omega)-L-arginino)succinate + AMP + diphosphate + H(+). It participates in amino-acid biosynthesis; L-arginine biosynthesis; L-arginine from L-ornithine and carbamoyl phosphate: step 2/3. This Streptomyces coelicolor (strain ATCC BAA-471 / A3(2) / M145) protein is Argininosuccinate synthase (argG).